A 300-amino-acid chain; its full sequence is Protoheme IX farnesyltransferase 1 (300 aa).

The next 9 membrane-spanning stretches (helical) occupy residues Val-28–Leu-48, Val-54–Ile-74, Ala-100–Asn-120, Leu-122–Leu-142, Asn-149–Thr-169, Ala-176–Ile-196, Cys-222–Met-242, Ser-243–Trp-263, and Phe-280–Ala-300.

The protein belongs to the UbiA prenyltransferase family. Protoheme IX farnesyltransferase subfamily.

The protein localises to the cell inner membrane. It carries out the reaction heme b + (2E,6E)-farnesyl diphosphate + H2O = Fe(II)-heme o + diphosphate. Its pathway is porphyrin-containing compound metabolism; heme O biosynthesis; heme O from protoheme: step 1/1. Its function is as follows. Converts heme B (protoheme IX) to heme O by substitution of the vinyl group on carbon 2 of heme B porphyrin ring with a hydroxyethyl farnesyl side group. The polypeptide is Protoheme IX farnesyltransferase 1 (Shewanella sp. (strain MR-4)).